Consider the following 486-residue polypeptide: Histidine--tRNA ligase, chloroplastic/mitochondrial (486 aa).

Belongs to the class-II aminoacyl-tRNA synthetase family.

The protein resides in the plastid. It is found in the chloroplast. The protein localises to the mitochondrion. The enzyme catalyses tRNA(His) + L-histidine + ATP = L-histidyl-tRNA(His) + AMP + diphosphate + H(+). This Arabidopsis thaliana (Mouse-ear cress) protein is Histidine--tRNA ligase, chloroplastic/mitochondrial.